The following is an 835-amino-acid chain: Ribosome-releasing factor 2, mitochondrial (835 aa).

The transit peptide at 1–50 directs the protein to the mitochondrion; it reads MPWCNTRLRTCGASPKIFLRRVRCPVLLHNWTIGRVSSVSKMILRFLRSY. In terms of domain architecture, tr-type G spans 57-343; sequence TRVRNIGIIA…AVVDYLPSPA (287 aa). Residues 66 to 73, 131 to 135, and 183 to 186 each bind GTP; these read AHIDAGKT, DTPGH, and NKMD.

The protein belongs to the TRAFAC class translation factor GTPase superfamily. Classic translation factor GTPase family. EF-G/EF-2 subfamily.

The protein resides in the mitochondrion. Its function is as follows. Mitochondrial GTPase that mediates the disassembly of ribosomes from messenger RNA at the termination of mitochondrial protein biosynthesis. Not involved in the GTP-dependent ribosomal translocation step during translation elongation. In Eremothecium gossypii (strain ATCC 10895 / CBS 109.51 / FGSC 9923 / NRRL Y-1056) (Yeast), this protein is Ribosome-releasing factor 2, mitochondrial.